The primary structure comprises 205 residues: Putative 3-methyladenine DNA glycosylase (205 aa).

This sequence belongs to the DNA glycosylase MPG family.

The polypeptide is Putative 3-methyladenine DNA glycosylase (Clostridium acetobutylicum (strain ATCC 824 / DSM 792 / JCM 1419 / IAM 19013 / LMG 5710 / NBRC 13948 / NRRL B-527 / VKM B-1787 / 2291 / W)).